Consider the following 1136-residue polypeptide: Carbamoyl phosphate synthase large chain (1136 aa).

The carboxyphosphate synthetic domain stretch occupies residues 1 to 402 (MPKRTDIKSV…SLGKAMRSID (402 aa)). Residues R129, R169, G175, G176, E208, I210, E215, G241, V242, H243, Q285, and E299 each coordinate ATP. An ATP-grasp 1 domain is found at 133 to 328 (KKVVKEAGAE…IAKIATKLAL (196 aa)). Q285, E299, and N301 together coordinate Mg(2+). Mn(2+) is bound by residues Q285, E299, and N301. The interval 403-551 (KRHMGFSWDG…YYYSCYADET (149 aa)) is oligomerization domain. The interval 552 to 962 (ELRKREREAV…AFAKSQLASY (411 aa)) is carbamoyl phosphate synthetic domain. Positions 681-881 (GEVLRQEHLN…LAKAAARIMA (201 aa)) constitute an ATP-grasp 2 domain. 10 residues coordinate ATP: R717, K765, L767, E772, G797, V798, H799, S800, Q840, and E852. Residues Q840, E852, and N854 each contribute to the Mg(2+) site. Positions 840, 852, and 854 each coordinate Mn(2+). The segment at 963-1136 (EGGLPTNGNV…KEEGEEARAQ (174 aa)) is allosteric domain. One can recognise an MGS-like domain in the interval 964-1122 (GGLPTNGNVF…QEHSRELYEL (159 aa)).

The protein belongs to the CarB family. Composed of two chains; the small (or glutamine) chain promotes the hydrolysis of glutamine to ammonia, which is used by the large (or ammonia) chain to synthesize carbamoyl phosphate. Tetramer of heterodimers (alpha,beta)4. It depends on Mg(2+) as a cofactor. Mn(2+) serves as cofactor.

It catalyses the reaction hydrogencarbonate + L-glutamine + 2 ATP + H2O = carbamoyl phosphate + L-glutamate + 2 ADP + phosphate + 2 H(+). The enzyme catalyses hydrogencarbonate + NH4(+) + 2 ATP = carbamoyl phosphate + 2 ADP + phosphate + 2 H(+). The protein operates within amino-acid biosynthesis; L-arginine biosynthesis; carbamoyl phosphate from bicarbonate: step 1/1. It functions in the pathway pyrimidine metabolism; UMP biosynthesis via de novo pathway; (S)-dihydroorotate from bicarbonate: step 1/3. In terms of biological role, large subunit of the glutamine-dependent carbamoyl phosphate synthetase (CPSase). CPSase catalyzes the formation of carbamoyl phosphate from the ammonia moiety of glutamine, carbonate, and phosphate donated by ATP, constituting the first step of 2 biosynthetic pathways, one leading to arginine and/or urea and the other to pyrimidine nucleotides. The large subunit (synthetase) binds the substrates ammonia (free or transferred from glutamine from the small subunit), hydrogencarbonate and ATP and carries out an ATP-coupled ligase reaction, activating hydrogencarbonate by forming carboxy phosphate which reacts with ammonia to form carbamoyl phosphate. The chain is Carbamoyl phosphate synthase large chain from Bifidobacterium animalis subsp. lactis (strain AD011).